The following is a 435-amino-acid chain: MIWKRSAVLRFYSVCGLLLQGSQGQFPLTQNVTVVEGGTAILTCRVDQNDNTSLQWSNPAQQTLYFDDKKALRDNRIELVRASWHELSISVSDVSLSDEGQYTCSLFTMPVKTSKAYLTVLGVPEKPQISGFSSPVMEGDLMQLTCKTSGSKPAADIRWFKNDKEIKDVKYLKEEDANRKTFTVSSTLDFRVDRSDDGVAVICRVDHESLNATPQVAMQVLEIHYTPSVKIIPSTPFPQEGQPLILTCESKGKPLPEPVLWTKDGGELPDPDRMVVSGRELNILFLNKTDNGTYRCEATNTIGQSSAEYVLIVHDVPNTLLPTTIIPSLTTATVTTTVAITTSPTTSATTSSIRDPNALAGQNGPDHALIGGIVAVVVFVTLCSIFLLGRYLARHKGTYLTNEAKGAEDAPDADTAIINAEGSQVNAEEKKEYFI.

Residues 1–24 (MIWKRSAVLRFYSVCGLLLQGSQG) form the signal peptide. Residues 25–367 (QFPLTQNVTV…ALAGQNGPDH (343 aa)) are Extracellular-facing. The Ig-like V-type domain occupies 27–119 (PLTQNVTVVE…PVKTSKAYLT (93 aa)). N-linked (GlcNAc...) asparagine glycosylation is found at asparagine 31 and asparagine 51. 3 disulfides stabilise this stretch: cysteine 44-cysteine 104, cysteine 146-cysteine 203, and cysteine 248-cysteine 296. 2 Ig-like C2-type domains span residues 127-219 (PQIS…VAMQ) and 227-312 (PSVK…YVLI). The N-linked (GlcNAc...) asparagine glycan is linked to asparagine 291. A helical membrane pass occupies residues 368-388 (ALIGGIVAVVVFVTLCSIFLL). Residues 389-435 (GRYLARHKGTYLTNEAKGAEDAPDADTAIINAEGSQVNAEEKKEYFI) lie on the Cytoplasmic side of the membrane. Serine 423 is subject to Phosphoserine.

It belongs to the nectin family.

It is found in the cell membrane. The protein localises to the synapse. The protein resides in the cell projection. Its subcellular location is the axon. Adhesion molecule that engages in homo- and heterophilic interactions with the other nectin-like family members, leading to cell aggregation. Important for synapse organization, providing regulated trans-synaptic adhesion. Preferentially binds to oligodendrocytes. Functionally, (Microbial infection) Induces cell fusion in neuron infected by a neuropathogenic strain of measles. Interacts with measles hemagglutinin to trigger hyperfusogenic F-mediated membrane fusion and presumably transsynaptic cell-to-cell transmission of the virus. This is Cell adhesion molecule 2 (CADM2) from Homo sapiens (Human).